Consider the following 294-residue polypeptide: Survival motor neuron protein (294 aa).

Residues 1 to 12 (MAMSSGGSGGGV) are compositionally biased toward gly residues. Residues 1-32 (MAMSSGGSGGGVPEQEDSVLFRRGTGQSDDSD) form a disordered region. Ala2 is subject to N-acetylalanine. Phosphoserine; by PKA is present on residues Ser4, Ser5, and Ser8. The interval 13–44 (PEQEDSVLFRRGTGQSDDSDIWDDTALIKAYD) is P1 (binding site for GEMIN2). Residue Thr25 is modified to Phosphothreonine. Residues Ser28 and Ser31 each carry the phosphoserine modification. Lys51 is covalently cross-linked (Glycyl lysine isopeptide (Lys-Gly) (interchain with G-Cter in SUMO2)). Residues 58–88 (DICETSGKPKTTPKRKPAKKNKSQKKNTAAP) form a disordered region. The segment covering 68-82 (TTPKRKPAKKNKSQK) has biased composition (basic residues). Thr69 bears the Phosphothreonine mark. Thr85 is subject to Phosphothreonine; by PKA. A Tudor domain is found at 91–151 (QWKVGDKCSA…LSPISEVANN (61 aa)). Residues 97–209 (KCSAIWSEDG…MPGPRLGPGK (113 aa)) form a required for interaction with RPP20/POP7 region. The segment covering 156-166 (AQENENESQVS) has biased composition (low complexity). The interval 156 to 222 (AQENENESQV…KFNGPPPPPP (67 aa)) is disordered. Ser187 carries the post-translational modification Phosphoserine; by PKA. Residues 194–204 (LPPPPPMPGPR) show a composition bias toward pro residues. A Glycyl lysine isopeptide (Lys-Gly) (interchain with G-Cter in SUMO2) cross-link involves residue Lys209. Residues 240 to 267 (PPIIPPPPPICPDSLDDADALGSMLISW) form a P2 (binding site for SM B) region. A required for interaction with SYNCRIP region spans residues 279-294 (GFRQNQKEGRCSHSLN).

It belongs to the SMN family. Homooligomer; may form higher order homooligomers in the dimer to octamer range. Part of the core SMN complex that contains SMN1, GEMIN2/SIP1, DDX20/GEMIN3, GEMIN4, GEMIN5, GEMIN6, GEMIN7, GEMIN8 and STRAP/UNRIP. Part of the SMN-Sm complex that contains SMN1, GEMIN2/SIP1, DDX20/GEMIN3, GEMIN4, GEMIN5, GEMIN6, GEMIN7, GEMIN8, STRAP/UNRIP and the Sm proteins SNRPB, SNRPD1, SNRPD2, SNRPD3, SNRPE, SNRPF and SNRPG. Component of an import snRNP complex composed of KPNB1, RNUT1, SMN1 and ZNF259. Interacts with DDX20, FBL, NOLA1, RNUT1, SYNCRIP and with several spliceosomal snRNP core Sm proteins, including SNRPB, SNRPD1, SNRPD2, SNRPD3, SNRPE and ILF3. Interacts with GEMIN2; the interaction is direct. Interacts with GEMIN3; the interaction is direct. Interacts with GEMIN8; the interaction is direct. Interacts with SNRPB; the interaction is direct. Interacts (via Tudor domain) with SNRPD1 (via C-terminus); the interaction is direct. Interacts with SNRPD2; the interaction is direct. Interacts (via Tudor domain) with SNRPD3 (via C-terminus); the interaction is direct. Interacts with SNRPE; the interaction is direct. Interacts with OSTF1, LSM10, LSM11 and RPP20/POP7. Interacts (via C-terminal region) with ZPR1 (via C-terminal region). Interacts (via Tudor domain) with COIL. Interacts with SETX; recruits SETX to POLR2A. Interacts with POLR2A (via the C-terminal domain (CTD)). Interacts with PRMT5. Interacts with XRN2. Interacts (via C-terminus) with FMR1 (via C-terminus); the interaction is direct and occurs in a RNA-independent manner. Interacts (via Tudor domain) with SF3B2 ('Arg-508'-methylated form). Interacts with WRAP53/TCAB1. Interacts (via Tudor domain) with ELAVL4 in an RNA-independent manner; the interaction is required for localization of ELAVL4 to RNA granules. Interacts with FRG1.

Its subcellular location is the nucleus. The protein localises to the gem. The protein resides in the cajal body. It localises to the cytoplasm. It is found in the cytoplasmic granule. Its subcellular location is the perikaryon. The protein localises to the cell projection. The protein resides in the neuron projection. It localises to the axon. It is found in the myofibril. Its subcellular location is the sarcomere. The protein localises to the z line. In terms of biological role, the SMN complex catalyzes the assembly of small nuclear ribonucleoproteins (snRNPs), the building blocks of the spliceosome, and thereby plays an important role in the splicing of cellular pre-mRNAs. Most spliceosomal snRNPs contain a common set of Sm proteins SNRPB, SNRPD1, SNRPD2, SNRPD3, SNRPE, SNRPF and SNRPG that assemble in a heptameric protein ring on the Sm site of the small nuclear RNA to form the core snRNP (Sm core). In the cytosol, the Sm proteins SNRPD1, SNRPD2, SNRPE, SNRPF and SNRPG are trapped in an inactive 6S pICln-Sm complex by the chaperone CLNS1A that controls the assembly of the core snRNP. To assemble core snRNPs, the SMN complex accepts the trapped 5Sm proteins from CLNS1A forming an intermediate. Binding of snRNA inside 5Sm ultimately triggers eviction of the SMN complex, thereby allowing binding of SNRPD3 and SNRPB to complete assembly of the core snRNP. Within the SMN complex, SMN1 acts as a structural backbone and together with GEMIN2 it gathers the Sm complex subunits. Ensures the correct splicing of U12 intron-containing genes that may be important for normal motor and proprioceptive neurons development. Also required for resolving RNA-DNA hybrids created by RNA polymerase II, that form R-loop in transcription terminal regions, an important step in proper transcription termination. May also play a role in the metabolism of small nucleolar ribonucleoprotein (snoRNPs). The sequence is that of Survival motor neuron protein (SMN1) from Macaca fascicularis (Crab-eating macaque).